The sequence spans 361 residues: UDP-N-acetylglucosamine--N-acetylmuramyl-(pentapeptide) pyrophosphoryl-undecaprenol N-acetylglucosamine transferase (361 aa).

Residues Ser-199 and Gln-290 each contribute to the UDP-N-acetyl-alpha-D-glucosamine site.

The protein belongs to the glycosyltransferase 28 family. MurG subfamily.

It localises to the cell membrane. It catalyses the reaction Mur2Ac(oyl-L-Ala-gamma-D-Glu-L-Lys-D-Ala-D-Ala)-di-trans,octa-cis-undecaprenyl diphosphate + UDP-N-acetyl-alpha-D-glucosamine = beta-D-GlcNAc-(1-&gt;4)-Mur2Ac(oyl-L-Ala-gamma-D-Glu-L-Lys-D-Ala-D-Ala)-di-trans,octa-cis-undecaprenyl diphosphate + UDP + H(+). The protein operates within cell wall biogenesis; peptidoglycan biosynthesis. Functionally, cell wall formation. Catalyzes the transfer of a GlcNAc subunit on undecaprenyl-pyrophosphoryl-MurNAc-pentapeptide (lipid intermediate I) to form undecaprenyl-pyrophosphoryl-MurNAc-(pentapeptide)GlcNAc (lipid intermediate II). This chain is UDP-N-acetylglucosamine--N-acetylmuramyl-(pentapeptide) pyrophosphoryl-undecaprenol N-acetylglucosamine transferase, found in Streptococcus mutans serotype c (strain ATCC 700610 / UA159).